A 338-amino-acid polypeptide reads, in one-letter code: Lipoate-protein ligase A (338 aa).

Residues 29-216 (SPNQRVLFLW…AFFAYYDEQV (188 aa)) enclose the BPL/LPL catalytic domain. Residues arginine 71, 76–79 (GAVF), and lysine 134 each bind ATP. Lysine 134 provides a ligand contact to (R)-lipoate.

Belongs to the LplA family. Monomer.

The protein resides in the cytoplasm. It catalyses the reaction L-lysyl-[lipoyl-carrier protein] + (R)-lipoate + ATP = N(6)-[(R)-lipoyl]-L-lysyl-[lipoyl-carrier protein] + AMP + diphosphate + H(+). The protein operates within protein modification; protein lipoylation via exogenous pathway; protein N(6)-(lipoyl)lysine from lipoate: step 1/2. It participates in protein modification; protein lipoylation via exogenous pathway; protein N(6)-(lipoyl)lysine from lipoate: step 2/2. Its function is as follows. Catalyzes both the ATP-dependent activation of exogenously supplied lipoate to lipoyl-AMP and the transfer of the activated lipoyl onto the lipoyl domains of lipoate-dependent enzymes. The polypeptide is Lipoate-protein ligase A (Yersinia pseudotuberculosis serotype O:1b (strain IP 31758)).